The primary structure comprises 3263 residues: Protein unc-80 (3263 aa).

7 disordered regions span residues 491-527, 627-666, 939-1010, 1042-1076, 1380-1475, 1633-1660, and 1680-1721; these read KSALTKTTNENRRTDHQRMPSTQKSVSGSTDDELDEG, NDTERRKSSDNCLAPHPTTNSRRSSLNTLSRRGINRSNPS, PTTS…DDGV, DEEISDNENEEGTSNEEAGLPQRRPLRQSSKQVKA, SRQS…RMRA, LRKQTETNSARASIHARQSTAVPRRESA, and MQQE…LPEK. The segment covering 499-508 has biased composition (basic and acidic residues); the sequence is NENRRTDHQR. The span at 509–519 shows a compositional bias: polar residues; it reads MPSTQKSVSGS. The span at 644-658 shows a compositional bias: low complexity; the sequence is TTNSRRSSLNTLSRR. Composition is skewed to polar residues over residues 956–967 and 981–1005; these read GAQSQKQSNDQA and SGGTTTGNDDSEGDSSPSTPRTVSS. The segment covering 1042–1055 has biased composition (acidic residues); it reads DEEISDNENEEGTS. The span at 1393–1402 shows a compositional bias: polar residues; it reads QGSTKSTTYV. The span at 1435 to 1447 shows a compositional bias: basic residues; sequence HKRKSFRNRKQSK. Polar residues-rich tracts occupy residues 1460–1469 and 1633–1653; these read GSLTSQQSPI and LRKQTETNSARASIHARQSTA. The segment covering 1680–1710 has biased composition (basic and acidic residues); sequence MQQEKEKEKEKEKEEKDALKKQSVEQDHSST. The next 5 membrane-spanning stretches (helical) occupy residues 2088–2108, 2318–2338, 2352–2372, 2953–2973, and 2995–3015; these read AIGMALSICWLLSPNIHGLYF, AFMFADLHLFINVINGIMIMH, YISISIHFNTLFASQGFFLIM, AIYLGLKVLMLTFGKLLAPMW, and AFVDFLLHSNLPISLFILPMI. Disordered regions lie at residues 3078–3166 and 3178–3198; these read YTPT…RTRS and RKSRHVSSAEESSEERGSVEL. The segment covering 3124–3135 has biased composition (acidic residues); the sequence is IPEDPEDSEDVI. Residues 3138–3166 are compositionally biased toward polar residues; the sequence is NSTGQVTSRISKSPSIPLNKTHQSSRTRS.

The protein belongs to the unc-80 family. As to expression, expressed in the nervous system. Expressed in both acetylcholine and GABA motor neurons.

The protein resides in the membrane. In terms of biological role, probable component of the nca-1 sodium channel complex, a cation channel that regulates neuronal activity by transmitting depolarization signals to synapses. Regulates the transition from slow to rapid forms of locomotion. Required for localization of nca-1 along axons and in non-synaptic regions. Contributes to endocytosis defects in synaptojanin mutants. Involved in the control of anasthetic response to halothane. The protein is Protein unc-80 (unc-80) of Caenorhabditis elegans.